Reading from the N-terminus, the 814-residue chain is Exostosin-like-3 homolog (814 aa).

Residues 1-14 (MAIKLNGSSRSFVP) are Cytoplasmic-facing. The helical; Signal-anchor for type II membrane protein transmembrane segment at 15-35 (SLRVSAFLIFIFFVITYIIIY) threads the bilayer. Residues asparagine 36, asparagine 227, asparagine 297, asparagine 322, asparagine 454, and asparagine 492 are each glycosylated (N-linked (GlcNAc...) asparagine). The Lumenal segment spans residues 36 to 814 (NVSFSEPSWI…QNHQKCFKYV (779 aa)). The UDP-N-acetyl-alpha-D-glucosamine site is built by arginine 570, asparagine 595, asparagine 620, arginine 625, aspartate 641, aspartate 642, and aspartate 643. Aspartate 643 contributes to the Mn(2+) binding site. The N-linked (GlcNAc...) asparagine glycan is linked to asparagine 685. A disulfide bridge links cysteine 726 with cysteine 774. 3 residues coordinate UDP-N-acetyl-alpha-D-glucosamine: glutamate 727, aspartate 728, and arginine 771. The active site involves aspartate 728.

This sequence belongs to the glycosyltransferase 47 family. Interacts with rib-1. Mn(2+) is required as a cofactor.

It localises to the endoplasmic reticulum membrane. The protein localises to the golgi apparatus membrane. It catalyses the reaction 3-O-(beta-D-GlcA-(1-&gt;3)-beta-D-Gal-(1-&gt;3)-beta-D-Gal-(1-&gt;4)-beta-D-Xyl)-L-seryl-[protein] + UDP-N-acetyl-alpha-D-glucosamine = 3-O-(alpha-D-GlcNAc-(1-&gt;4)-beta-D-GlcA-(1-&gt;3)-beta-D-Gal-(1-&gt;3)-beta-D-Gal-(1-&gt;4)-beta-D-Xyl)-L-seryl-[protein] + UDP + H(+). It carries out the reaction 3-O-{[(1-&gt;4)-beta-D-GlcA-(1-&gt;4)-alpha-D-GlcNAc](n)-(1-&gt;4)-beta-D-GlcA-(1-&gt;3)-beta-D-Gal-(1-&gt;3)-beta-D-Gal-(1-&gt;4)-beta-D-Xyl}-L-seryl-[protein] + UDP-N-acetyl-alpha-D-glucosamine = 3-O-{alpha-D-GlcNAc-[(1-&gt;4)-beta-D-GlcA-(1-&gt;4)-alpha-D-GlcNAc](n)-(1-&gt;4)-beta-D-GlcA-(1-&gt;3)-beta-D-Gal-(1-&gt;3)-beta-D-Gal-(1-&gt;4)-beta-D-Xyl}-L-seryl-[protein] + UDP + H(+). The catalysed reaction is 3-O-{alpha-D-GlcNAc-[(1-&gt;4)-beta-D-GlcA-(1-&gt;4)-alpha-D-GlcNAc](n)-(1-&gt;4)-beta-D-GlcA-(1-&gt;3)-beta-D-Gal-(1-&gt;3)-beta-D-Gal-(1-&gt;4)-beta-D-Xyl}-L-seryl-[protein] + UDP-alpha-D-glucuronate = 3-O-{[(1-&gt;4)-beta-D-GlcA-(1-&gt;4)-alpha-D-GlcNAc](n+1)-(1-&gt;4)-beta-D-GlcA-(1-&gt;3)-beta-D-Gal-(1-&gt;3)-beta-D-Gal-(1-&gt;4)-beta-D-Xyl}-L-seryl-[protein] + UDP + H(+). It participates in glycan metabolism; heparan sulfate biosynthesis. Binding to rib-1 is required for GlcAT-II activity and for increasing GlcNAc-II activity in vitro. Its function is as follows. Glycosyltransferase required for the biosynthesis of heparan sulfate. Initiates heparan sulfate synthesis by transferring GlcNAc to the (GlcA-Gal-Gal-Xyl-)Ser core linker (GlcNAcT-I activity). In association with rib-1, is also responsible for the alternating addition of beta-1-4-linked glucuronic acid (GlcA) and alpha-1-4-linked N-acetylglucosamine (GlcNAc) units to nascent heparan sulfate chains (GlcNAcT-II and GlcAT-II activities). Required for normal ventral epidermal enclosure during the early stages of embryonic development. In addition, involved in the elongation of the pharyngeal isthmus during the later stages of embryonic development. Involved in the directed migration of hermaphrodite-specific neurons. The protein is Exostosin-like-3 homolog (rib-2) of Caenorhabditis elegans.